The primary structure comprises 397 residues: MMKKRKRKVSKENVALTISSSVGEYGENSGTLPTDLMVEILSRVPAKSAARFRCVSNDWNSLLRSPYLTNLFLKRSSARPHLLITFQAEGKWSFFSSPEYLISDQNSNLVVVDNHMDVPKDYSFGVCVPVCGLMCTSNEWVLSRKRDARMMICNPSTGQFKSLPKVRSCRGNVITYIGYNPIEKQYKVLCMTIREKPFKFKAEEHQVLTLGTGKLKWRMLECSVDHYPYYHGSICINGVLFYLAMKSESKEYMTVSFHMKDENFMFIPNQDLLSTLINYKGRLGGIRHKSFGFMDGGDVGFELWILDVVNQEWIRSIHVLPPMWKDVVGETRVYFVGIIGSCEVVFSPFVKSNPFYIFHLDMKSNSITRVEIKGTGPLEGQAVYTFVNHIENVNLIM.

Residues 26 to 75 (GENSGTLPTDLMVEILSRVPAKSAARFRCVSNDWNSLLRSPYLTNLFLKR) form the F-box domain.

This is F-box protein At3g49450 from Arabidopsis thaliana (Mouse-ear cress).